The following is a 241-amino-acid chain: Small ribosomal subunit protein uS2 (241 aa).

The protein belongs to the universal ribosomal protein uS2 family.

The sequence is that of Small ribosomal subunit protein uS2 from Citrobacter koseri (strain ATCC BAA-895 / CDC 4225-83 / SGSC4696).